A 338-amino-acid chain; its full sequence is Ketol-acid reductoisomerase (NADP(+)) (338 aa).

In terms of domain architecture, KARI N-terminal Rossmann spans 2–182 (TKMYYEKDTD…GGARAGVLET (181 aa)). Residues 25 to 28 (YGSQ), Ser-51, Ser-53, and 83 to 86 (DELQ) contribute to the NADP(+) site. His-108 is an active-site residue. Residue Gly-134 coordinates NADP(+). The 148-residue stretch at 183–330 (TFRTETETDL…SEIRKLYCWN (148 aa)) folds into the KARI C-terminal knotted domain. Residues Asp-191, Glu-195, Glu-227, and Glu-231 each coordinate Mg(2+). Residue Ser-252 participates in substrate binding.

This sequence belongs to the ketol-acid reductoisomerase family. It depends on Mg(2+) as a cofactor.

The catalysed reaction is (2R)-2,3-dihydroxy-3-methylbutanoate + NADP(+) = (2S)-2-acetolactate + NADPH + H(+). It carries out the reaction (2R,3R)-2,3-dihydroxy-3-methylpentanoate + NADP(+) = (S)-2-ethyl-2-hydroxy-3-oxobutanoate + NADPH + H(+). It participates in amino-acid biosynthesis; L-isoleucine biosynthesis; L-isoleucine from 2-oxobutanoate: step 2/4. Its pathway is amino-acid biosynthesis; L-valine biosynthesis; L-valine from pyruvate: step 2/4. In terms of biological role, involved in the biosynthesis of branched-chain amino acids (BCAA). Catalyzes an alkyl-migration followed by a ketol-acid reduction of (S)-2-acetolactate (S2AL) to yield (R)-2,3-dihydroxy-isovalerate. In the isomerase reaction, S2AL is rearranged via a Mg-dependent methyl migration to produce 3-hydroxy-3-methyl-2-ketobutyrate (HMKB). In the reductase reaction, this 2-ketoacid undergoes a metal-dependent reduction by NADPH to yield (R)-2,3-dihydroxy-isovalerate. The polypeptide is Ketol-acid reductoisomerase (NADP(+)) (Clostridium botulinum (strain Alaska E43 / Type E3)).